The primary structure comprises 176 residues: Ribosome maturation factor RimM (176 aa).

In terms of domain architecture, PRC barrel spans 97 to 176 (DSEFYHRDLI…QILVDWDPDF (80 aa)).

The protein belongs to the RimM family. Binds ribosomal protein uS19.

Its subcellular location is the cytoplasm. Its function is as follows. An accessory protein needed during the final step in the assembly of 30S ribosomal subunit, possibly for assembly of the head region. Essential for efficient processing of 16S rRNA. May be needed both before and after RbfA during the maturation of 16S rRNA. It has affinity for free ribosomal 30S subunits but not for 70S ribosomes. This chain is Ribosome maturation factor RimM, found in Shewanella frigidimarina (strain NCIMB 400).